The chain runs to 309 residues: Ribonuclease Z (309 aa).

His-63, His-65, Asp-67, His-68, His-141, Asp-212, and His-270 together coordinate Zn(2+). The active-site Proton acceptor is the Asp-67.

It belongs to the RNase Z family. Homodimer. Zn(2+) serves as cofactor.

It catalyses the reaction Endonucleolytic cleavage of RNA, removing extra 3' nucleotides from tRNA precursor, generating 3' termini of tRNAs. A 3'-hydroxy group is left at the tRNA terminus and a 5'-phosphoryl group is left at the trailer molecule.. Its function is as follows. Zinc phosphodiesterase, which displays some tRNA 3'-processing endonuclease activity. Probably involved in tRNA maturation, by removing a 3'-trailer from precursor tRNA. The protein is Ribonuclease Z of Lactobacillus delbrueckii subsp. bulgaricus (strain ATCC 11842 / DSM 20081 / BCRC 10696 / JCM 1002 / NBRC 13953 / NCIMB 11778 / NCTC 12712 / WDCM 00102 / Lb 14).